Consider the following 436-residue polypeptide: 3-ketoacyl-CoA thiolase (436 aa).

Cys-99 serves as the catalytic Acyl-thioester intermediate. Active-site proton acceptor residues include His-392 and Cys-422.

The protein belongs to the thiolase-like superfamily. Thiolase family. Heterotetramer of two alpha chains (FadJ) and two beta chains (FadI).

Its subcellular location is the cytoplasm. It carries out the reaction an acyl-CoA + acetyl-CoA = a 3-oxoacyl-CoA + CoA. It participates in lipid metabolism; fatty acid beta-oxidation. Catalyzes the final step of fatty acid oxidation in which acetyl-CoA is released and the CoA ester of a fatty acid two carbons shorter is formed. In Alteromonas mediterranea (strain DSM 17117 / CIP 110805 / LMG 28347 / Deep ecotype), this protein is 3-ketoacyl-CoA thiolase.